We begin with the raw amino-acid sequence, 642 residues long: Capsid vertex component 2 (642 aa).

The interval 1–48 is interaction with major capsid protein/MCP; that stretch reads MSLLHTFWRLPVAVFFEPHEENVLRCPERVLRRLLEDAAVTMRGGGWR. The segment at 97–125 is disordered; the sequence is DEGPSPRTLLQPPCRPRSSSPGTGVAGAS.

The protein belongs to the herpesviridae CVC2 protein family. In terms of assembly, heterodimerizes with CVC1. Interacts with major capsid protein/MCP and triplex capsid protein 1/TRX1 at the pentamer vertices. Interacts with the large tegument protein/LTP.

It is found in the virion. The protein resides in the host nucleus. Functionally, capsid vertex-specific component that plays a role during viral DNA encapsidation, assuring correct genome cleavage and presumably stabilizing capsids that contain full-length viral genomes. Participates in the interaction between the capsid and the tegument through interaction with the large tegument protein/LTP. The chain is Capsid vertex component 2 from Homo sapiens (Human).